The following is a 652-amino-acid chain: DNA ligase (652 aa).

Residues aspartate 29–aspartate 33, serine 78–leucine 79, and glutamate 107 each bind NAD(+). The active-site N6-AMP-lysine intermediate is the lysine 109. Residues arginine 130, glutamate 164, lysine 278, and lysine 302 each coordinate NAD(+). Positions 395, 398, 413, and 418 each coordinate Zn(2+). Residues alanine 577–leucine 652 enclose the BRCT domain.

It belongs to the NAD-dependent DNA ligase family. LigA subfamily. It depends on Mg(2+) as a cofactor. Requires Mn(2+) as cofactor.

It catalyses the reaction NAD(+) + (deoxyribonucleotide)n-3'-hydroxyl + 5'-phospho-(deoxyribonucleotide)m = (deoxyribonucleotide)n+m + AMP + beta-nicotinamide D-nucleotide.. Its function is as follows. DNA ligase that catalyzes the formation of phosphodiester linkages between 5'-phosphoryl and 3'-hydroxyl groups in double-stranded DNA using NAD as a coenzyme and as the energy source for the reaction. It is essential for DNA replication and repair of damaged DNA. This is DNA ligase from Streptococcus sanguinis (strain SK36).